We begin with the raw amino-acid sequence, 228 residues long: Cytochrome c oxidase subunit 2 (228 aa).

The Mitochondrial intermembrane portion of the chain corresponds to 1–14 (MAYPLQLGLQDASS). Residues 15-45 (PIMEELTNFHDHTLMIVFLISSLVLYLISLM) traverse the membrane as a helical segment. Residues 46–59 (LTTKLIHTSTMDAQ) are Mitochondrial matrix-facing. A helical transmembrane segment spans residues 60–87 (EVETIWTILPAIILILIALPSLRILYMM). Residues 88–228 (DEINNPVLTV…FENWSVSMTQ (141 aa)) lie on the Mitochondrial intermembrane side of the membrane. Cu cation-binding residues include H161, C196, E198, C200, H204, and M207. E198 lines the Mg(2+) pocket.

It belongs to the cytochrome c oxidase subunit 2 family. As to quaternary structure, component of the cytochrome c oxidase (complex IV, CIV), a multisubunit enzyme composed of 14 subunits. The complex is composed of a catalytic core of 3 subunits MT-CO1, MT-CO2 and MT-CO3, encoded in the mitochondrial DNA, and 11 supernumerary subunits COX4I, COX5A, COX5B, COX6A, COX6B, COX6C, COX7A, COX7B, COX7C, COX8 and NDUFA4, which are encoded in the nuclear genome. The complex exists as a monomer or a dimer and forms supercomplexes (SCs) in the inner mitochondrial membrane with NADH-ubiquinone oxidoreductase (complex I, CI) and ubiquinol-cytochrome c oxidoreductase (cytochrome b-c1 complex, complex III, CIII), resulting in different assemblies (supercomplex SCI(1)III(2)IV(1) and megacomplex MCI(2)III(2)IV(2)). Found in a complex with TMEM177, COA6, COX18, COX20, SCO1 and SCO2. Interacts with TMEM177 in a COX20-dependent manner. Interacts with COX20. Interacts with COX16. Requires Cu cation as cofactor.

Its subcellular location is the mitochondrion inner membrane. The enzyme catalyses 4 Fe(II)-[cytochrome c] + O2 + 8 H(+)(in) = 4 Fe(III)-[cytochrome c] + 2 H2O + 4 H(+)(out). Component of the cytochrome c oxidase, the last enzyme in the mitochondrial electron transport chain which drives oxidative phosphorylation. The respiratory chain contains 3 multisubunit complexes succinate dehydrogenase (complex II, CII), ubiquinol-cytochrome c oxidoreductase (cytochrome b-c1 complex, complex III, CIII) and cytochrome c oxidase (complex IV, CIV), that cooperate to transfer electrons derived from NADH and succinate to molecular oxygen, creating an electrochemical gradient over the inner membrane that drives transmembrane transport and the ATP synthase. Cytochrome c oxidase is the component of the respiratory chain that catalyzes the reduction of oxygen to water. Electrons originating from reduced cytochrome c in the intermembrane space (IMS) are transferred via the dinuclear copper A center (CU(A)) of subunit 2 and heme A of subunit 1 to the active site in subunit 1, a binuclear center (BNC) formed by heme A3 and copper B (CU(B)). The BNC reduces molecular oxygen to 2 water molecules using 4 electrons from cytochrome c in the IMS and 4 protons from the mitochondrial matrix. This Meriones shawi (Shaw's jird) protein is Cytochrome c oxidase subunit 2 (MT-CO2).